Reading from the N-terminus, the 305-residue chain is Superkiller complex protein 8 (305 aa).

WD repeat units follow at residues 14-57 (AHED…LEMQ), 62-101 (GHQL…QIRS), 104-143 (AGPV…KEYS), 146-187 (TRGK…HTLE), 188-227 (GHAM…LAAT), 230-269 (GHGS…CVHT), and 272-305 (DHQD…DCPI).

This sequence belongs to the SKI8 family. In terms of assembly, component of the PAF1 complex. Component of the SKI complex.

Its subcellular location is the nucleus. It localises to the cytoplasm. Component of the PAF1 complex (PAF1C) which has multiple functions during transcription by RNA polymerase II and is implicated in regulation of development and maintenance of embryonic stem cell pluripotency. PAF1C associates with RNA polymerase II through interaction with POLR2A CTD non-phosphorylated and 'Ser-2'- and 'Ser-5'-phosphorylated forms and is involved in transcriptional elongation, acting both independently and synergistically with TCEA1 and in cooperation with the DSIF complex and HTATSF1. Also acts as a component of the SKI complex, a multiprotein complex that assists the RNA-degrading exosome during the mRNA decay and quality-control pathways. The SKI complex catalyzes mRNA extraction from 80S ribosomal complexes in the 3'-5' direction and channels mRNA to the cytosolic exosome for degradation. The protein is Superkiller complex protein 8 (skic8) of Xenopus laevis (African clawed frog).